The chain runs to 888 residues: Serine/arginine repetitive matrix protein 1 (888 aa).

A PWI domain is found at 27 to 126 (QLKFAECLEK…AGIPTAFLEL (100 aa)). The span at 139–169 (EKLASMKKQDEDKEKRDKEDKDNREKRDRSR) shows a compositional bias: basic and acidic residues. The segment at 139 to 888 (EKLASMKKQD…MRKAQVSPPS (750 aa)) is disordered. The segment covering 170 to 206 (SPRRRKSRSPSPRRRSSPIRRERKRSHSRSPHHRTKS) has biased composition (basic residues). Composition is skewed to basic and acidic residues over residues 213–232 (PEKK…KETV) and 254–276 (ETKE…EKTR). Basic residues-rich tracts occupy residues 277-325 (QRSP…RTPP) and 332-347 (PRHR…RRRS). Composition is skewed to low complexity over residues 348-364 (SASL…SRSR) and 473-496 (SVQQ…SSSS). Basic residues-rich tracts occupy residues 528-554 (PRKR…RRRS) and 561-585 (PRRR…RSPS). Residues 586 to 598 (PRRYSPPIQRRYS) are compositionally biased toward low complexity. Basic residues-rich tracts occupy residues 614-629 (PKRR…RRVS) and 642-656 (AKRR…HRKG). Over residues 662 to 677 (SNRETRSPPQNKRDSP) the composition is skewed to basic and acidic residues. Low complexity-rich tracts occupy residues 697–712 (ASAS…PSTR), 728–749 (ASTP…SGSP), and 763–775 (ARSR…WSPA). Over residues 780–790 (SPTQSPSPARN) the composition is skewed to polar residues. The segment covering 798-823 (KKKKKKKDKKHKKDKKHKKHKKHKKE) has biased composition (basic residues). The span at 826-843 (AVAAAPAAVAAADTTSAQ) shows a compositional bias: low complexity. A compositionally biased stretch (basic and acidic residues) spans 866–876 (DLEKHLREKAL).

Belongs to the splicing factor SR family.

It localises to the nucleus. Involved in pre-mRNA splicing and processing events. The chain is Serine/arginine repetitive matrix protein 1 (SRRM1) from Gallus gallus (Chicken).